The sequence spans 178 residues: Cytidylate kinase (178 aa).

Residue 7–15 (GLPGTGTTT) participates in ATP binding.

It belongs to the cytidylate kinase family. Type 2 subfamily.

Its subcellular location is the cytoplasm. It carries out the reaction CMP + ATP = CDP + ADP. It catalyses the reaction dCMP + ATP = dCDP + ADP. In Methanococcus maripaludis (strain DSM 14266 / JCM 13030 / NBRC 101832 / S2 / LL), this protein is Cytidylate kinase.